The chain runs to 353 residues: Small ribosomal subunit biogenesis GTPase RsgA (353 aa).

The segment at methionine 1 to threonine 24 is disordered. The segment covering glutamine 10–lysine 23 has biased composition (basic residues). Residues alanine 104 to phenylalanine 274 form the CP-type G domain. GTP contacts are provided by residues asparagine 160–aspartate 163 and glycine 214–serine 222. 4 residues coordinate Zn(2+): cysteine 298, cysteine 303, histidine 305, and cysteine 311.

This sequence belongs to the TRAFAC class YlqF/YawG GTPase family. RsgA subfamily. Monomer. Associates with 30S ribosomal subunit, binds 16S rRNA. Zn(2+) is required as a cofactor.

The protein resides in the cytoplasm. Its function is as follows. One of several proteins that assist in the late maturation steps of the functional core of the 30S ribosomal subunit. Helps release RbfA from mature subunits. May play a role in the assembly of ribosomal proteins into the subunit. Circularly permuted GTPase that catalyzes slow GTP hydrolysis, GTPase activity is stimulated by the 30S ribosomal subunit. This Klebsiella pneumoniae subsp. pneumoniae (strain ATCC 700721 / MGH 78578) protein is Small ribosomal subunit biogenesis GTPase RsgA.